We begin with the raw amino-acid sequence, 117 residues long: Prefoldin subunit beta (117 aa).

This sequence belongs to the prefoldin subunit beta family. Heterohexamer of two alpha and four beta subunits.

The protein resides in the cytoplasm. Molecular chaperone capable of stabilizing a range of proteins. Seems to fulfill an ATP-independent, HSP70-like function in archaeal de novo protein folding. This Thermococcus kodakarensis (strain ATCC BAA-918 / JCM 12380 / KOD1) (Pyrococcus kodakaraensis (strain KOD1)) protein is Prefoldin subunit beta.